Reading from the N-terminus, the 443-residue chain is Xaa-Pro dipeptidase (443 aa).

Residues Asp-248, Asp-259, His-339, Glu-384, and Glu-423 each coordinate Mn(2+).

It belongs to the peptidase M24B family. Bacterial-type prolidase subfamily. It depends on Mn(2+) as a cofactor.

It carries out the reaction Xaa-L-Pro dipeptide + H2O = an L-alpha-amino acid + L-proline. In terms of biological role, splits dipeptides with a prolyl residue in the C-terminal position. This is Xaa-Pro dipeptidase from Colwellia psychrerythraea (strain 34H / ATCC BAA-681) (Vibrio psychroerythus).